The following is a 254-amino-acid chain: Protein N-terminal and lysine N-methyltransferase EFM7 (254 aa).

S-adenosyl-L-methionine-binding positions include tryptophan 57, 84–86, aspartate 106, tryptophan 138, and serine 165; that span reads GAA.

This sequence belongs to the class I-like SAM-binding methyltransferase superfamily. EFM7 family.

It is found in the cytoplasm. S-adenosyl-L-methionine-dependent protein methyltransferase that trimethylates the N-terminal glycine 'Gly-2' of elongation factor 1-alpha, before also catalyzing the mono- and dimethylation of 'Lys-3'. This is Protein N-terminal and lysine N-methyltransferase EFM7 from Debaryomyces hansenii (strain ATCC 36239 / CBS 767 / BCRC 21394 / JCM 1990 / NBRC 0083 / IGC 2968) (Yeast).